Consider the following 275-residue polypeptide: Pyrroline-5-carboxylate reductase (275 aa).

This sequence belongs to the pyrroline-5-carboxylate reductase family.

Its subcellular location is the cytoplasm. It carries out the reaction L-proline + NADP(+) = (S)-1-pyrroline-5-carboxylate + NADPH + 2 H(+). It catalyses the reaction L-proline + NAD(+) = (S)-1-pyrroline-5-carboxylate + NADH + 2 H(+). Its pathway is amino-acid biosynthesis; L-proline biosynthesis; L-proline from L-glutamate 5-semialdehyde: step 1/1. In terms of biological role, catalyzes the reduction of 1-pyrroline-5-carboxylate (PCA) to L-proline. The polypeptide is Pyrroline-5-carboxylate reductase (Pasteurella multocida (strain Pm70)).